Reading from the N-terminus, the 90-residue chain is Large ribosomal subunit protein bL27 (90 aa).

The disordered stretch occupies residues 1-22 (MAHKKAGGSTRNGRDSNPKMLG).

This sequence belongs to the bacterial ribosomal protein bL27 family.

This is Large ribosomal subunit protein bL27 from Coxiella burnetii (strain Dugway 5J108-111).